We begin with the raw amino-acid sequence, 328 residues long: Alpha-tubulin N-acetyltransferase 2 (328 aa).

The region spanning S5–F185 is the N-acetyltransferase domain. Residues F119–K132 and S155–K164 contribute to the acetyl-CoA site. Disordered regions lie at residues E219–K261 and G282–H328. A compositionally biased stretch (pro residues) spans T238–V248. The span at P312–H328 shows a compositional bias: polar residues.

This sequence belongs to the acetyltransferase ATAT1 family.

It catalyses the reaction L-lysyl-[alpha-tubulin] + acetyl-CoA = N(6)-acetyl-L-lysyl-[alpha-tubulin] + CoA + H(+). In terms of biological role, specifically acetylates 'Lys-40' in alpha-tubulin on the lumenal side of microtubules. Promotes microtubule destabilization and accelerates microtubule dynamics; this activity may be independent of acetylation activity. Acetylates alpha-tubulin with a slow enzymatic rate, due to a catalytic site that is not optimized for acetyl transfer. Enters the microtubule through each end and diffuses quickly throughout the lumen of microtubules. Acetylates only long/old microtubules because of its slow acetylation rate since it does not have time to act on dynamically unstable microtubules before the enzyme is released. In Trypanosoma cruzi (strain CL Brener), this protein is Alpha-tubulin N-acetyltransferase 2.